Here is a 238-residue protein sequence, read N- to C-terminus: Formate dehydrogenase, cytochrome b556 subunit (238 aa).

Histidine 23 and histidine 62 together coordinate heme b. The next 4 helical transmembrane spans lie at 23 to 43 (HWML…FFFP), 60 to 80 (AIHP…ALLY), 120 to 140 (MLFW…IIMW), and 155 to 175 (IAIL…LVHI). 2 residues coordinate heme b: histidine 160 and histidine 174.

The protein belongs to the formate dehydrogenase gamma subunit family. Formate dehydrogenase is a membrane-bound complex, formed by subunits alpha, beta and gamma. Requires heme as cofactor.

It is found in the cell membrane. In terms of biological role, allows to use formate as major electron donor during anaerobic respiration. Subunit gamma is probably the cytochrome b556(FDO) component of the formate dehydrogenase. This chain is Formate dehydrogenase, cytochrome b556 subunit (fdxI), found in Haemophilus influenzae (strain ATCC 51907 / DSM 11121 / KW20 / Rd).